A 369-amino-acid chain; its full sequence is Uroporphyrinogen decarboxylase (369 aa).

Residues 1 to 26 are disordered; that stretch reads MPVLHVDARPGSGPGGVSPPPSGAAL. Residues 56 to 60, Asp-105, Tyr-180, Ser-235, and His-348 contribute to the substrate site; that span reads RQAGR.

Belongs to the uroporphyrinogen decarboxylase family. In terms of assembly, homodimer.

Its subcellular location is the cytoplasm. The enzyme catalyses uroporphyrinogen III + 4 H(+) = coproporphyrinogen III + 4 CO2. It participates in porphyrin-containing compound metabolism; protoporphyrin-IX biosynthesis; coproporphyrinogen-III from 5-aminolevulinate: step 4/4. Functionally, catalyzes the decarboxylation of four acetate groups of uroporphyrinogen-III to yield coproporphyrinogen-III. This chain is Uroporphyrinogen decarboxylase, found in Frankia casuarinae (strain DSM 45818 / CECT 9043 / HFP020203 / CcI3).